Consider the following 86-residue polypeptide: uncharacterized protein (86 aa).

As to expression, retina-specific.

This is an uncharacterized protein from Homo sapiens (Human).